Reading from the N-terminus, the 156-residue chain is Small ribosomal subunit protein uS7c (156 aa).

Belongs to the universal ribosomal protein uS7 family. Part of the 30S ribosomal subunit.

The protein resides in the plastid. Its subcellular location is the chloroplast. Its function is as follows. One of the primary rRNA binding proteins, it binds directly to 16S rRNA where it nucleates assembly of the head domain of the 30S subunit. The polypeptide is Small ribosomal subunit protein uS7c (rps7) (Euglena gracilis).